Consider the following 327-residue polypeptide: Regulatory protein MsrR (327 aa).

Residues 1–18 are compositionally biased toward basic and acidic residues; sequence MDKETNDNEYRRQSEHRT. The disordered stretch occupies residues 1 to 24; that stretch reads MDKETNDNEYRRQSEHRTSAPKRK. Residues 1-31 are Cytoplasmic-facing; that stretch reads MDKETNDNEYRRQSEHRTSAPKRKKKKKIRK. A helical; Signal-anchor for type II membrane protein membrane pass occupies residues 32 to 52; that stretch reads LPIILLIVVILLIALVVYIVH. Topologically, residues 53–327 are extracellular; that stretch reads SYNSGVEYAK…QAIKDFLDED (275 aa).

This sequence belongs to the LytR/CpsA/Psr (LCP) family.

It localises to the cell membrane. Functionally, involved in SarA attenuation. Affects resistance to oxacillin and teicoplanin, as well as the synthesis of virulence factors. This Staphylococcus aureus (strain NCTC 8325 / PS 47) protein is Regulatory protein MsrR (msrR).